Reading from the N-terminus, the 59-residue chain is UPF0391 membrane protein lpl2443 (59 aa).

2 consecutive transmembrane segments (helical) span residues A5–V25 and I30–L50.

This sequence belongs to the UPF0391 family.

Its subcellular location is the cell membrane. This chain is UPF0391 membrane protein lpl2443, found in Legionella pneumophila (strain Lens).